The primary structure comprises 264 residues: Triosephosphate isomerase (264 aa).

13–15 (NWK) lines the substrate pocket. Catalysis depends on H106, which acts as the Electrophile. E179 functions as the Proton acceptor in the catalytic mechanism. Residues G185, S223, and 244–245 (GG) contribute to the substrate site.

This sequence belongs to the triosephosphate isomerase family. As to quaternary structure, homodimer.

The protein resides in the cytoplasm. It carries out the reaction D-glyceraldehyde 3-phosphate = dihydroxyacetone phosphate. Its pathway is carbohydrate biosynthesis; gluconeogenesis. The protein operates within carbohydrate degradation; glycolysis; D-glyceraldehyde 3-phosphate from glycerone phosphate: step 1/1. Functionally, involved in the gluconeogenesis. Catalyzes stereospecifically the conversion of dihydroxyacetone phosphate (DHAP) to D-glyceraldehyde-3-phosphate (G3P). This Acinetobacter baumannii (strain AB0057) protein is Triosephosphate isomerase.